The chain runs to 245 residues: MPFDPAFLWQTFVALLSGIPLALQLAVFSVALGTVLAFGLALMRVSRLWWLDLPARFYIFAFRGTPLLVQIYIIYYGLSQFPDVRHSFIWPFLRDAYWCAMAALALNTAAYTAEIMRGGLLSVPAGQIEAAKACGMGRVKLFRRIVIPQAIRQMLPGYSNEVILMVKSTSLASTITIMEITGIAAKLISESYRTVEVFSCAGAIYLILNFIVARLFTLLEWALWPERRNNRLTTDPVDRKGELHA.

5 helical membrane passes run 12 to 32 (FVAL…SVAL), 57 to 77 (FYIF…IYYG), 96 to 116 (AYWC…AEIM), 163 to 183 (ILMV…ITGI), and 204 to 224 (IYLI…WALW). The 198-residue stretch at 19–216 (IPLALQLAVF…ILNFIVARLF (198 aa)) folds into the ABC transmembrane type-1 domain.

Belongs to the binding-protein-dependent transport system permease family. HisMQ subfamily.

The protein localises to the cell inner membrane. Its function is as follows. Component of the octopine active transport system probably consisting of four subunits: Q, M, P and T. The chain is Octopine transport system permease protein OccM (occM) from Rhizobium radiobacter (Agrobacterium tumefaciens).